A 170-amino-acid chain; its full sequence is Sec-independent protein translocase protein TATA, chloroplastic (170 aa).

A chloroplast-targeting transit peptide spans 1 to 61 (MGIPVVVPVA…GGSGGDLAAV (61 aa)). The Lumenal portion of the chain corresponds to 62–84 (AASVAARPRRAGSGGGGALGCKC). Residues 85 to 105 (LFGLGVPELAVIAGVAALVFG) traverse the membrane as a helical segment. At 106-170 (PKQLPEIGRS…LEASSSKESA (65 aa)) the chain is on the stromal side. The segment covering 130 to 139 (FETELKKEPG) has biased composition (basic and acidic residues). The interval 130 to 170 (FETELKKEPGEGGDQPPPATPTAVSGGEEKGLEASSSKESA) is disordered.

It belongs to the TatA/E family. In terms of assembly, in thylakoid membranes, TATC and TATB form a large receptor complex, containing about eight TATC-TATB pairs, which binds the precursor protein. Twin arginine signal peptide promotes pH-triggered docking of TATA oligomers to TATC-TATB receptor complex, inducing a conformational switch of TATA that results in activation of the translocase. TATA dissociates from TATC-TATB upon completion of translocation.

It is found in the plastid. Its subcellular location is the chloroplast thylakoid membrane. In terms of biological role, part of the twin-arginine translocation (Tat) system that transports large folded proteins containing a characteristic twin-arginine motif in their signal peptide across the thylakoid membrane. Involved in delta pH-dependent protein transport required for chloroplast development, especially thylakoid membrane formation. TATC and TATB mediate precursor recognition, whereas TATA facilitates translocation. In Zea mays (Maize), this protein is Sec-independent protein translocase protein TATA, chloroplastic.